Consider the following 864-residue polypeptide: Leucine--tRNA ligase (864 aa).

Positions 42–52 (PYPSGKLHMGH) match the 'HIGH' region motif. The short motif at 624–628 (KMSKS) is the 'KMSKS' region element. Residue Lys627 participates in ATP binding.

It belongs to the class-I aminoacyl-tRNA synthetase family.

The protein resides in the cytoplasm. The enzyme catalyses tRNA(Leu) + L-leucine + ATP = L-leucyl-tRNA(Leu) + AMP + diphosphate. The chain is Leucine--tRNA ligase from Burkholderia multivorans (strain ATCC 17616 / 249).